The primary structure comprises 922 residues: Ubiquitin carboxyl-terminal hydrolase 29 (922 aa).

Residues 160 to 196 (GILENQGGKGQNTLSSDVQTNEDILKEDNPVPNKKYK) are disordered. The segment covering 170–181 (QNTLSSDVQTNE) has biased composition (polar residues). The USP domain occupies 285-885 (QGFPNLGNTC…SGYIFFYMHN (601 aa)). The active-site Nucleophile is the Cys294. The Proton acceptor role is filled by His840.

The protein belongs to the peptidase C19 family.

The protein resides in the cytoplasm. Its subcellular location is the perinuclear region. The enzyme catalyses Thiol-dependent hydrolysis of ester, thioester, amide, peptide and isopeptide bonds formed by the C-terminal Gly of ubiquitin (a 76-residue protein attached to proteins as an intracellular targeting signal).. Its function is as follows. Deubiquitinase involved in innate antiviral immunity by mediating 'Lys-48'-linked deubiquitination of CGAS, thereby promoting its stabilization. This is Ubiquitin carboxyl-terminal hydrolase 29 from Homo sapiens (Human).